A 142-amino-acid chain; its full sequence is Large ribosomal subunit protein uL11 (142 aa).

This sequence belongs to the universal ribosomal protein uL11 family. Part of the ribosomal stalk of the 50S ribosomal subunit. Interacts with L10 and the large rRNA to form the base of the stalk. L10 forms an elongated spine to which L12 dimers bind in a sequential fashion forming a multimeric L10(L12)X complex. Post-translationally, one or more lysine residues are methylated.

Functionally, forms part of the ribosomal stalk which helps the ribosome interact with GTP-bound translation factors. This Pectobacterium atrosepticum (strain SCRI 1043 / ATCC BAA-672) (Erwinia carotovora subsp. atroseptica) protein is Large ribosomal subunit protein uL11.